Consider the following 494-residue polypeptide: Putative NAD kinase 3 (494 aa).

Belongs to the NAD kinase family.

The enzyme catalyses NAD(+) + ATP = ADP + NADP(+) + H(+). The sequence is that of Putative NAD kinase 3 from Oryza sativa subsp. japonica (Rice).